A 153-amino-acid polypeptide reads, in one-letter code: Pheromone-binding protein Gp-9 (153 aa).

Residues 1-19 form the signal peptide; sequence MKTFVLHIFIFALVAFASA. 3 disulfide bridges follow: Cys37–Cys77, Cys73–Cys129, and Cys118–Cys138.

It belongs to the PBP/GOBP family. Homodimer.

It is found in the secreted. Functionally, colony queen number, a major feature of social organization, is associated with worker genotype for Gp-9. Colonies are headed by either a single reproductive queen (monogyne form) or multiple queens (polygyne form). Differences in worker Gp-9 genotypes between social forms may cause differences in workers' abilities to recognize queens and regulate their numbers. The chain is Pheromone-binding protein Gp-9 from Solenopsis sp. (strain B0-153) (Fire ant).